The primary structure comprises 754 residues: Nitrate reductase (754 aa).

The tat-type signal signal peptide spans 1-31 (MKFTRRSFVKASALATAMVAAGCSPQPVAPK). The 4Fe-4S Mo/W bis-MGD-type domain maps to 39-95 (ATWYKTVCRYCGVGCGVMVAAKDNRVVAVKGDTENPVNKGLLCVKGYYLDRIMNTEE). [4Fe-4S] cluster is bound by residues cysteine 46, cysteine 49, cysteine 53, and cysteine 81. Residues lysine 83, glutamine 144, asparagine 169, cysteine 173, 256–258 (GTD), methionine 341, glutamine 345, asparagine 451, lysine 497, aspartate 524, 642–651 (TGRILEHWHT), asparagine 728, and lysine 745 each bind Mo-bis(molybdopterin guanine dinucleotide).

The protein belongs to the prokaryotic molybdopterin-containing oxidoreductase family. NasA/NapA/NarB subfamily. Component of the nitrate reductase NapAB complex composed of NapA and NapB. The cofactor is [4Fe-4S] cluster. Requires Mo-bis(molybdopterin guanine dinucleotide) as cofactor. In terms of processing, predicted to be exported by the Tat system. The position of the signal peptide cleavage has not been experimentally proven.

It is found in the secreted. It catalyses the reaction 2 Fe(II)-[cytochrome] + nitrate + 2 H(+) = 2 Fe(III)-[cytochrome] + nitrite + H2O. Functionally, catalytic subunit of the nitrate reductase complex NapAB. Receives electrons from NapB and catalyzes the reduction of nitrate to nitrite. The polypeptide is Nitrate reductase (Symbiobacterium thermophilum (strain DSM 24528 / JCM 14929 / IAM 14863 / T)).